Consider the following 97-residue polypeptide: Thiosulfate sulfurtransferase/rhodanese-like domain-containing protein 3 (97 aa).

In terms of domain architecture, Rhodanese spans 32-84 (YKELKNLLNSKNIMLIDVREIWEILEYQKIPESINVPLDEVGEALQMNPRDFK). Lysine 84 is modified (N6-succinyllysine).

The sequence is that of Thiosulfate sulfurtransferase/rhodanese-like domain-containing protein 3 (TSTD3) from Homo sapiens (Human).